The sequence spans 338 residues: Ketol-acid reductoisomerase (NADP(+)) (338 aa).

The region spanning 1-181 (MKVFYDKDCD…GGGRTGIIET (181 aa)) is the KARI N-terminal Rossmann domain. Residues 24–27 (YGSQ), Arg47, Ser50, Thr52, and 82–85 (DEFQ) each bind NADP(+). His107 is a catalytic residue. Position 133 (Gly133) interacts with NADP(+). The 146-residue stretch at 182–327 (TFKDETETDL…EQLRSMMPWI (146 aa)) folds into the KARI C-terminal knotted domain. Asp190, Glu194, Glu226, and Glu230 together coordinate Mg(2+). Ser251 serves as a coordination point for substrate.

Belongs to the ketol-acid reductoisomerase family. It depends on Mg(2+) as a cofactor.

The enzyme catalyses (2R)-2,3-dihydroxy-3-methylbutanoate + NADP(+) = (2S)-2-acetolactate + NADPH + H(+). The catalysed reaction is (2R,3R)-2,3-dihydroxy-3-methylpentanoate + NADP(+) = (S)-2-ethyl-2-hydroxy-3-oxobutanoate + NADPH + H(+). It functions in the pathway amino-acid biosynthesis; L-isoleucine biosynthesis; L-isoleucine from 2-oxobutanoate: step 2/4. It participates in amino-acid biosynthesis; L-valine biosynthesis; L-valine from pyruvate: step 2/4. Involved in the biosynthesis of branched-chain amino acids (BCAA). Catalyzes an alkyl-migration followed by a ketol-acid reduction of (S)-2-acetolactate (S2AL) to yield (R)-2,3-dihydroxy-isovalerate. In the isomerase reaction, S2AL is rearranged via a Mg-dependent methyl migration to produce 3-hydroxy-3-methyl-2-ketobutyrate (HMKB). In the reductase reaction, this 2-ketoacid undergoes a metal-dependent reduction by NADPH to yield (R)-2,3-dihydroxy-isovalerate. This Pseudomonas putida (strain ATCC 700007 / DSM 6899 / JCM 31910 / BCRC 17059 / LMG 24140 / F1) protein is Ketol-acid reductoisomerase (NADP(+)).